Here is a 154-residue protein sequence, read N- to C-terminus: DNA gyrase inhibitor (154 aa).

Belongs to the DNA gyrase inhibitor family. In terms of assembly, interacts with DNA gyrase.

The protein localises to the cytoplasm. Functionally, inhibits the supercoiling activity of DNA gyrase. Acts by inhibiting DNA gyrase at an early step, prior to (or at the step of) binding of DNA by the gyrase. It protects cells against toxins that target DNA gyrase, by inhibiting activity of these toxins and reducing the formation of lethal double-strand breaks in the cell. This Pectobacterium carotovorum subsp. carotovorum (strain PC1) protein is DNA gyrase inhibitor.